A 478-amino-acid chain; its full sequence is Violaxanthin de-epoxidase, chloroplastic (478 aa).

A coiled-coil region spans residues 388 to 453; sequence LVERLEKKVE…RELSKEEMDV (66 aa).

It belongs to the calycin superfamily. Lipocalin family.

It localises to the plastid. Its subcellular location is the chloroplast thylakoid membrane. The enzyme catalyses all-trans-violaxanthin + 2 L-ascorbate = all-trans-zeaxanthin + 2 L-dehydroascorbate + 2 H2O. Functionally, part of the xanthophyll (or violaxanthin) cycle for controlling the concentration of zeaxanthin in chloroplasts. Catalyzes the two-step mono de-epoxidation reaction. Stereospecific for all-trans xanthophylls. Zeaxanthin induces the dissipation of excitation energy in the chlorophyll of the light-harvesting protein complex of photosystem II. The sequence is that of Violaxanthin de-epoxidase, chloroplastic (VDE1) from Nicotiana tabacum (Common tobacco).